Consider the following 382-residue polypeptide: Anhydro-N-acetylmuramic acid kinase (382 aa).

22–29 (GTSMDGVD) lines the ATP pocket.

This sequence belongs to the anhydro-N-acetylmuramic acid kinase family.

The catalysed reaction is 1,6-anhydro-N-acetyl-beta-muramate + ATP + H2O = N-acetyl-D-muramate 6-phosphate + ADP + H(+). The protein operates within amino-sugar metabolism; 1,6-anhydro-N-acetylmuramate degradation. It participates in cell wall biogenesis; peptidoglycan recycling. Functionally, catalyzes the specific phosphorylation of 1,6-anhydro-N-acetylmuramic acid (anhMurNAc) with the simultaneous cleavage of the 1,6-anhydro ring, generating MurNAc-6-P. Is required for the utilization of anhMurNAc either imported from the medium or derived from its own cell wall murein, and thus plays a role in cell wall recycling. In Burkholderia orbicola (strain AU 1054), this protein is Anhydro-N-acetylmuramic acid kinase.